The chain runs to 381 residues: Alpha-methylacyl-CoA racemase (381 aa).

Residues arginine 36 and 54-57 (LDLK) each bind substrate. Residue lysine 57 is modified to N6-acetyllysine. N6-acetyllysine; alternate occurs at positions 86 and 100. N6-succinyllysine; alternate occurs at positions 86 and 100. The residue at position 117 (lysine 117) is an N6-acetyllysine. Position 120–125 (120–125 (GHDINY)) interacts with substrate. Histidine 121 (proton acceptor) is an active-site residue. Aspartate 151 functions as the Proton donor in the catalytic mechanism. At lysine 267 the chain carries N6-succinyllysine. The tract at residues 316–344 (TDGEQLPSPRPAPLLSRTPAVPSAKRDPS) is disordered. Residues 379 to 381 (ANL) carry the Microbody targeting signal motif.

This sequence belongs to the CoA-transferase III family. As to quaternary structure, monomer.

The protein localises to the peroxisome. It localises to the mitochondrion. The enzyme catalyses a (2S)-2-methylacyl-CoA = a (2R)-2-methylacyl-CoA. It catalyses the reaction (25R)-3alpha,7alpha,12alpha-trihydroxy-5beta-cholestan-26-oyl-CoA = (25S)-3alpha,7alpha,12alpha-trihydroxy-5beta-cholestan-26-oyl-CoA. The catalysed reaction is (2R,6)-dimethylheptanoyl-CoA = (2S,6)-dimethylheptanoyl-CoA. It functions in the pathway lipid metabolism; bile acid biosynthesis. The protein operates within lipid metabolism; fatty acid metabolism. Its function is as follows. Catalyzes the interconversion of (R)- and (S)-stereoisomers of alpha-methyl-branched-chain fatty acyl-CoA esters. Acts only on coenzyme A thioesters, not on free fatty acids, and accepts as substrates a wide range of alpha-methylacyl-CoAs, including pristanoyl-CoA, trihydroxycoprostanoyl-CoA (an intermediate in bile acid synthesis), and arylpropionic acids like the anti-inflammatory drug ibuprofen (2-(4-isobutylphenyl)propionic acid) but neither 3-methyl-branched nor linear-chain acyl-CoAs. In Mus musculus (Mouse), this protein is Alpha-methylacyl-CoA racemase (Amacr).